The following is a 670-amino-acid chain: Rhophilin-1 (670 aa).

The segment at 1-20 (MILEERPDGAGAGEESPRLQ) is disordered. Residues 23-97 (DSLTQIQCGQ…LEELSGGVDP (75 aa)) enclose the REM-1 domain. Ser24 is modified (phosphoserine). A BRO1 domain is found at 108 to 457 (PMIPLGLKET…LAKYAELDRE (350 aa)). The PDZ domain occupies 513-592 (PVHLTRGEGG…ASLQVVSLLP (80 aa)). The segment at 616–670 (QREHGCKTPASTWASPRPLLNWSRKAQQGKTGGCPQPCAPVKPAPPSSLKHPGWP) is disordered. Residues 652 to 661 (PCAPVKPAPP) are compositionally biased toward pro residues.

This sequence belongs to the RHPN family. Binds specifically to GTP-Rho. Interacts with ROPN1.

In terms of biological role, has no enzymatic activity. May serve as a target for Rho, and interact with some cytoskeletal component upon Rho binding or relay a Rho signal to other molecules. The chain is Rhophilin-1 from Homo sapiens (Human).